We begin with the raw amino-acid sequence, 159 residues long: Dihydrofolate reductase (159 aa).

Residues 1 to 158 enclose the DHFR domain; that stretch reads MISLIAALAV…HSYCFEILER (158 aa). Position 5 (Ile5) interacts with substrate. NADP(+) is bound by residues Ala7 and 13 to 19; that span reads VIGMENA. Residue Asp27 coordinates substrate. 45–46 contacts NADP(+); it reads HT. Residues Arg52 and Arg57 each contribute to the substrate site. NADP(+) is bound by residues 63 to 64, Lys76, and 95 to 102; these read SS and GGGRVYEQ. A substrate-binding site is contributed by Thr113.

Belongs to the dihydrofolate reductase family.

The enzyme catalyses (6S)-5,6,7,8-tetrahydrofolate + NADP(+) = 7,8-dihydrofolate + NADPH + H(+). Its pathway is cofactor biosynthesis; tetrahydrofolate biosynthesis; 5,6,7,8-tetrahydrofolate from 7,8-dihydrofolate: step 1/1. Functionally, key enzyme in folate metabolism. Catalyzes an essential reaction for de novo glycine and purine synthesis, and for DNA precursor synthesis. The chain is Dihydrofolate reductase (folA) from Escherichia coli O6:H1 (strain CFT073 / ATCC 700928 / UPEC).